We begin with the raw amino-acid sequence, 336 residues long: Potassium channel subfamily K member 1 (336 aa).

Residues 1–20 lie on the Cytoplasmic side of the membrane; it reads MLQSLAGSSCVRLVERHRSA. The helical transmembrane segment at 21-41 threads the bilayer; sequence WCFGFLVLGYLLYLVFGAVVF. Topologically, residues 42-103 are extracellular; it reads SSVELPYEDL…SNASGNWNWD (62 aa). N-linked (GlcNAc...) asparagine glycosylation occurs at N95. Residues 104–116 constitute an intramembrane region (helical); sequence FTSALFFASTVLS. The stretch at 117–122 is an intramembrane region; the sequence is TTGYGH. Positions 117–122 are selectivity filter 1; that stretch reads TTGYGH. Residues 123-132 are Extracellular-facing; it reads TVPLSDGGKA. Residues 133 to 156 form a helical membrane-spanning segment; sequence FCIIYSVIGIPFTLLFLTAVVQRV. Residues 157–181 lie on the Cytoplasmic side of the membrane; it reads TIHVTRRPVLYFHVRWGFSKQAVAI. The chain crosses the membrane as a helical span at residues 182 to 202; that stretch reads VHAVLLGVVTVSCFFFIPAAV. Residues 203 to 211 are Extracellular-facing; the sequence is FSVLEDDWN. An intramembrane region (helical) is located at residues 212–224; sequence FLESFYFCFISLS. The selectivity filter 2 stretch occupies residues 225–230; sequence TIGLGD. Residues 225–231 lie within the membrane without spanning it; the sequence is TIGLGDY. The Extracellular segment spans residues 232 to 243; the sequence is VPGEGYNQKFRE. The helical transmembrane segment at 244-267 threads the bilayer; the sequence is LYKIGITCYLLLGLIAMLVVLETF. At 268-336 the chain is on the cytoplasmic side; it reads CELHELKKFR…PALADGASDH (69 aa). K274 participates in a covalent cross-link: Glycyl lysine isopeptide (Lys-Gly) (interchain with G-Cter in SUMO). The tract at residues 293-299 is important for intracellular retention in recycling endosomes; that stretch reads IIEHDQL. Residues 307 to 336 are disordered; that stretch reads QAAGVQEDQKQNEPFVSPQPPALADGASDH.

This sequence belongs to the two pore domain potassium channel (TC 1.A.1.8) family. Homodimer; disulfide-linked. Heterodimer with KCNK2; disulfide-linked. In astrocytes, forms mostly heterodimeric potassium channels with KCNK2, with only a minor proportion of functional channels containing homodimeric KCNK1. Interacts with KCNK3 and KCNK9, forming functional heterodimeric channels. Interacts with GNG4. Identified in a complex with PSD and ARF6; interacts only with PSD that is bound to ARF6. Interacts with UBE2I. In terms of processing, sumoylation is controversial. Sumoylated by UBE2I. Not sumoylated when expressed in xenopus oocytes or mammalian cells. Sumoylation inactivates the channel, but does not interfere with expression at the cell membrane. Sumoylation of a single subunit is sufficient to silence the dimeric channel. Sumoylation of KCNK1 is sufficient to silence heterodimeric channels formed by KCNK1 and KCNK3 or KCNK9. Desumoylated by SENP1; this activates the channel. Desumoylated by SENP1; this strongly increases halothane-mediated activation of heterodimeric channels formed with KCNK9. SENP1 treatment has no effect.

Its subcellular location is the cell membrane. The protein resides in the recycling endosome. The protein localises to the synaptic cell membrane. It is found in the cytoplasmic vesicle. It localises to the perikaryon. Its subcellular location is the cell projection. The protein resides in the dendrite. The protein localises to the apical cell membrane. It carries out the reaction K(+)(in) = K(+)(out). It catalyses the reaction NH4(+)(in) = NH4(+)(out). The catalysed reaction is Na(+)(in) = Na(+)(out). The enzyme catalyses Rb(+)(in) = Rb(+)(out). It carries out the reaction Cs(+)(in) = Cs(+)(out). It catalyses the reaction Li(+)(in) = Li(+)(out). The catalysed reaction is L-glutamate(out) = L-glutamate(in). The enzyme catalyses chloride(in) = chloride(out). Functionally, ion channel that contributes to passive transmembrane potassium transport and to the regulation of the resting membrane potential in brain astrocytes, but also in kidney and in other tissues. Forms dimeric channels through which potassium ions pass in accordance with their electrochemical gradient. The channel is selective for K(+) ions at physiological potassium concentrations and at neutral pH, but becomes permeable to Na(+) at subphysiological K(+) levels and upon acidification of the extracellular medium. The homodimer has very low potassium channel activity, when expressed in heterologous systems, and can function as weakly inward rectifying potassium channel. Channel activity is modulated by activation of serotonin receptors. Heterodimeric channels containing KCNK1 and KCNK2 have much higher activity, and may represent the predominant form in astrocytes. Heterodimeric channels containing KCNK1 and KCNK3 or KCNK9 have much higher activity. Heterodimeric channels formed by KCNK1 and KCNK9 may contribute to halothane-sensitive currents. Mediates outward rectifying potassium currents in dentate gyrus granule cells and contributes to the regulation of their resting membrane potential. Contributes to the regulation of action potential firing in dentate gyrus granule cells and down-regulates their intrinsic excitability. In astrocytes, the heterodimer formed by KCNK1 and KCNK2 is required for rapid glutamate release in response to activation of G-protein coupled receptors, such as F2R and CNR1. Required for normal ion and water transport in the kidney. Contributes to the regulation of the resting membrane potential of pancreatic beta cells. The low channel activity of homodimeric KCNK1 may be due to sumoylation. The low channel activity may be due to rapid internalization from the cell membrane and retention in recycling endosomes. Permeable to monovalent cations with ion selectivity for K(+) &gt; Rb(+) &gt;&gt; NH4(+) &gt;&gt; Cs(+) = Na(+) = Li(+). The polypeptide is Potassium channel subfamily K member 1 (Bos taurus (Bovine)).